The primary structure comprises 389 residues: uncharacterized protein (389 aa).

An N-terminal signal peptide occupies residues 1-29 (MQPSFTPSGGKWLSIAVILLVIGLVVGFA).

The protein belongs to the bacterial solute-binding protein 1 family. WtpA subfamily.

This is an uncharacterized protein from Thermoplasma volcanium (strain ATCC 51530 / DSM 4299 / JCM 9571 / NBRC 15438 / GSS1).